Here is a 311-residue protein sequence, read N- to C-terminus: uncharacterized protein (311 aa).

The span at 1–12 shows a compositional bias: polar residues; sequence MPATDTNSTHTT. 2 disordered regions span residues 1-44 and 205-268; these read MPAT…DEEH and ERPS…ATVH. Positions 35–44 are enriched in basic and acidic residues; it reads TSDKHADEEH.

Belongs to the HHV-5 HKLF1 family.

This is an uncharacterized protein from Human cytomegalovirus (strain AD169) (HHV-5).